A 140-amino-acid chain; its full sequence is MIDINSIKEALPHRYPMLLVDRVLEVSEDEIVALKNVTVNEPFFNGHFPQYPVMPGVLIMEALAQTAGVLELSKEENKGKLVFYAGMDKVKFKKQVVPGDQLIMTAKFVKRRGTIAVVEAKAEVDGKLAASGTLTFAIGQ.

Residue H47 is part of the active site.

Belongs to the thioester dehydratase family. FabZ subfamily.

The protein resides in the cytoplasm. It catalyses the reaction a (3R)-hydroxyacyl-[ACP] = a (2E)-enoyl-[ACP] + H2O. In terms of biological role, involved in unsaturated fatty acids biosynthesis. Catalyzes the dehydration of short chain beta-hydroxyacyl-ACPs and long chain saturated and unsaturated beta-hydroxyacyl-ACPs. This chain is 3-hydroxyacyl-[acyl-carrier-protein] dehydratase FabZ, found in Streptococcus sanguinis (strain SK36).